The sequence spans 2603 residues: Ankyrin repeat domain-containing protein 17 (2603 aa).

The residue at position 1 (Met1) is an N-acetylmethionine. The segment covering 1-32 (MEKATVPAAAEGEGSPPAAAAVAAPPAAAAAE) has biased composition (low complexity). A disordered region spans residues 1 to 127 (MEKATVPAAA…DDDEEEEVSE (127 aa)). Residues Ser15 and Ser42 each carry the phosphoserine modification. A compositionally biased stretch (basic residues) spans 68 to 77 (PHHKAKRNRT). Low complexity predominate over residues 82–92 (SSSESSSDSDN). A compositionally biased stretch (gly residues) spans 93–107 (SGGGGGGGGGGGGGT). The span at 112-127 (SEEEEDDDDEEEEVSE) shows a compositional bias: acidic residues. Position 152 is a phosphoserine (Ser152). ANK repeat units lie at residues 229–258 (SDNR…SVNE), 262–291 (EGES…NVED), 296–325 (GDIT…DVNA), 329–358 (TGNT…SIED), 362–391 (NGHT…GINT), 396–425 (FKES…DQEH), 429–458 (EMHT…QVNM), 462–491 (SFES…SLEE), 495–524 (EGYT…NINA), 529–558 (TQET…DIEL), 559–588 (GCST…NVHA), 592–621 (TGDT…DLEH), 625–654 (GGRT…NVNR), 659–688 (NDHT…DPTH), and 692–721 (DGST…NLLA). Residue Lys314 forms a Glycyl lysine isopeptide (Lys-Gly) (interchain with G-Cter in SUMO2) linkage. Residues 770-792 (VRSKAASKQKSNSHLPANSQDVQ) are disordered. The span at 775-792 (ASKQKSNSHLPANSQDVQ) shows a compositional bias: polar residues. Phosphoserine is present on Ser799. 10 ANK repeats span residues 1078–1107 (NHDT…SIEH), 1111–1140 (KGFT…DIEA), 1145–1174 (TKDT…NKEH), 1178–1207 (SDYT…EINS), 1213–1242 (LGIS…DINA), 1247–1276 (NRNT…NVEH), 1280–1309 (TGLT…DVNA), 1315–1344 (SRDT…HIDV), 1348–1377 (KGNT…DVDA), and 1381–1410 (RKIT…QFPS). A coiled-coil region spans residues 1438–1522 (VQAKDRQAAE…EKEKLKVEEE (85 aa)). Ser1453 is modified (phosphoserine). Disordered stretches follow at residues 1475–1496 (AKRE…RKLE) and 1513–1713 (EKEK…PKRE). The segment covering 1477 to 1487 (REKRKEKRRKK) has biased composition (basic residues). Low complexity-rich tracts occupy residues 1526–1546 (LTEP…TWTT), 1598–1607 (ESKSSSTSES), and 1616–1636 (SSCS…NHAS). Ser1631 carries the post-translational modification Phosphoserine. Composition is skewed to polar residues over residues 1638 to 1648 (VVTTTMASKKQ) and 1671 to 1699 (LSET…SPNG). Phosphoserine occurs at positions 1692, 1696, and 1705. The KH domain maps to 1721–1785 (RRSKKVSVPS…ESTRQATQLI (65 aa)). Arg1870 is subject to Asymmetric dimethylarginine. Disordered stretches follow at residues 1902-1991 (PRLP…PSVR), 2007-2195 (TTVT…SSSA), and 2269-2327 (VSSQ…YGSV). Composition is skewed to low complexity over residues 1946–1989 (SNQN…SSPS) and 2007–2024 (TTVT…TNAT). Phosphoserine is present on residues Ser2038, Ser2040, Ser2041, Ser2043, Ser2055, and Ser2063. 3 stretches are compositionally biased toward low complexity: residues 2068–2077 (ASASEQEASS), 2087–2108 (RPPH…QQPP), and 2175–2189 (PPSH…TPAP). A compositionally biased stretch (polar residues) spans 2269-2298 (VSSQSTPESMLSGKSSYLPNSDPLHQSDTS). Over residues 2303-2313 (FRPPLQRPAPS) the composition is skewed to pro residues. Ser2373 bears the Phosphoserine mark. Residues 2378–2447 (LTPCSSASNE…TGTSAPSVIG (70 aa)) form a disordered region. Polar residues predominate over residues 2379-2391 (TPCSSASNESPAQ). The segment covering 2392–2411 (SVSSGVRAPSPAPSSVPLGS) has biased composition (low complexity). Ser2401 bears the Phosphoserine mark. The span at 2435–2447 (IRQTGTSAPSVIG) shows a compositional bias: polar residues.

In terms of assembly, interacts (via N-terminus) with NOD2. Interacts with CDK2, MCM3, MCM5, MCM7, CDC6 and PCNA. Interacts with MAVS and IFIH1. Interacts (via the second ankyrin repeat cluster) with RIGI. Post-translationally, phosphorylated by CDK2. As to expression, highly expressed in fetal liver. Detected in adult liver cells, ovarian oocytes, seminiferous tubules of the testes and pelvic region of the kidney. It was not detected in heart, gut, lung, spleen and skeletal muscle. Earliest specific in situ marker of hepatic differentiation during embryogenesis, useful for characterization of inductive events involved in hepatic specification.

The protein resides in the cytoplasm. The protein localises to the nucleus. Its function is as follows. Could play pivotal roles in cell cycle and DNA regulation. Involved in innate immune defense against viruse by positively regulating the viral dsRNA receptors RIGI and IFIH1 signaling pathways. Involves in NOD2- and NOD1-mediated responses to bacteria suggesting a role in innate antibacterial immune pathways too. Could play a central role for the formation and/or maintenance of the blood vessels of the circulation system. The protein is Ankyrin repeat domain-containing protein 17 (Ankrd17) of Mus musculus (Mouse).